The chain runs to 232 residues: MATSAASSEHFEKLHEIFRGLHEDLRGVPERLLGMAGTEEKKKLIRDFDEKQQEANETLAEMEEELRYAPLSFRNPMMSKLRTYRKDLAKLHREVRSTPLTATPGARGDMKYGTYAVENEHMNRLQSQRALLLQGTDSLNRATQSIERSHRIAAETDQIGSEIIEELGEQRDQLERTKSRLVNTSENLSKSRKILRSMSRKVTTNKLLLSIVILLELAILGGLVYYKFLRRH.

A2 is modified (N-acetylalanine). Interaction with CLINT1 stretches follow at residues 2–23 (ATSAASSEHFEKLHEIFRGLHE) and 69–73 (APLSF). Over 2–208 (ATSAASSEHF…SRKVTTNKLL (207 aa)) the chain is Cytoplasmic. Positions 35 to 98 (MAGTEEKKKL…AKLHREVRST (64 aa)) form a coiled coil. Phosphothreonine is present on T103. Omega-N-methylarginine is present on R107. S138 is modified (phosphoserine). A coiled-coil region spans residues 161 to 198 (SEIIEELGEQRDQLERTKSRLVNTSENLSKSRKILRSM). Residues 209–229 (LSIVILLELAILGGLVYYKFL) form a helical; Anchor for type IV membrane protein membrane-spanning segment. The Vesicular portion of the chain corresponds to 230–232 (RRH).

The protein belongs to the VTI1 family. In terms of assembly, forms a SNARE complex with STX7, STX8 and VAMP8 which functions in the homotypic fusion of late endosomes. Component of the SNARE complex composed of STX7, STX8, VAMP7 and VIT1B that is required for heterotypic fusion of late endosomes with lysosomes. May interact with STX17. Interacts with CLINT1.

The protein resides in the early endosome membrane. It localises to the late endosome membrane. The protein localises to the lysosome membrane. It is found in the cytoplasmic granule. Its subcellular location is the recycling endosome membrane. Its function is as follows. V-SNARE that mediates vesicle transport pathways through interactions with t-SNAREs on the target membrane. These interactions are proposed to mediate aspects of the specificity of vesicle trafficking and to promote fusion of the lipid bilayers. May be concerned with increased secretion of cytokines associated with cellular senescence. The chain is Vesicle transport through interaction with t-SNAREs homolog 1B (VTI1B) from Bos taurus (Bovine).